A 129-amino-acid polypeptide reads, in one-letter code: Glycine cleavage system H protein (129 aa).

The Lipoyl-binding domain maps to 24-106 (SYTVGISEHA…FGDGWFFRVM (83 aa)). Lys65 carries the post-translational modification N6-lipoyllysine.

The protein belongs to the GcvH family. In terms of assembly, the glycine cleavage system is composed of four proteins: P, T, L and H. It depends on (R)-lipoate as a cofactor.

Its function is as follows. The glycine cleavage system catalyzes the degradation of glycine. The H protein shuttles the methylamine group of glycine from the P protein to the T protein. The protein is Glycine cleavage system H protein of Shewanella halifaxensis (strain HAW-EB4).